A 308-amino-acid polypeptide reads, in one-letter code: Cytochrome b (308 aa).

4 consecutive transmembrane segments (helical) span residues 1–21, 45–66, 81–101, and 146–166; these read FGSL…LMAM, WLIR…YLHI, WNTG…GYVL, and FFAL…IHLT. Residues His-51 and His-65 each contribute to the heme b site. The heme b site is built by His-150 and His-164. Position 169 (His-169) interacts with a ubiquinone. The next 3 helical transmembrane spans lie at 194–214, 256–276, and 288–308; these read TKDI…AMFS, LGGV…PFLH, and LSQL…WVGS.

This sequence belongs to the cytochrome b family. As to quaternary structure, the cytochrome bc1 complex contains 11 subunits: 3 respiratory subunits (MT-CYB, CYC1 and UQCRFS1), 2 core proteins (UQCRC1 and UQCRC2) and 6 low-molecular weight proteins (UQCRH/QCR6, UQCRB/QCR7, UQCRQ/QCR8, UQCR10/QCR9, UQCR11/QCR10 and a cleavage product of UQCRFS1). This cytochrome bc1 complex then forms a dimer. The cofactor is heme b.

The protein resides in the mitochondrion inner membrane. Its function is as follows. Component of the ubiquinol-cytochrome c reductase complex (complex III or cytochrome b-c1 complex) that is part of the mitochondrial respiratory chain. The b-c1 complex mediates electron transfer from ubiquinol to cytochrome c. Contributes to the generation of a proton gradient across the mitochondrial membrane that is then used for ATP synthesis. In Asthenes dorbignyi (Creamy-breasted canastero), this protein is Cytochrome b (MT-CYB).